A 271-amino-acid chain; its full sequence is DNA repair protein RecO (271 aa).

Residues 248–271 (AVGVEDSVRQDGDRDSTTRTPSSA) are disordered. The span at 253 to 264 (DSVRQDGDRDST) shows a compositional bias: basic and acidic residues.

Belongs to the RecO family.

Functionally, involved in DNA repair and RecF pathway recombination. The polypeptide is DNA repair protein RecO (Rhodococcus opacus (strain B4)).